The primary structure comprises 113 residues: Dynein light chain Tctex-type 1 (113 aa).

Met-1 is modified (N-acetylmethionine). Residues 41 to 113 (QWTTNVVEQT…CIVSAFGLSI (73 aa)) are interaction with GNB1.

The protein belongs to the dynein light chain Tctex-type family. In terms of assembly, homodimer. The cytoplasmic dynein 1 complex consists of two catalytic heavy chains (HCs) and a number of non-catalytic subunits presented by intermediate chains (ICs), light intermediate chains (LICs) and light chains (LCs); the composition seems to vary in respect to the IC, LIC and LC composition. The heavy chain homodimer serves as a scaffold for the probable homodimeric assembly of the respective non-catalytic subunits. The ICs and LICs bind directly to the HC dimer and dynein LCs assemble on the IC dimer. DYNLT1 and DYNLT3 compete for association with dynein IC (DYNC1I1 or DYNC1I2). Self-associates. Interacts with RHO. Interacts with DYNC1I1 and DYNC1I2. Interacts with DOC2A, DOC2B and SCN10A. Interacts with PVR. Interacts with SVIL isoform 2. Interacts with GNB1; the interaction occurs in presence of guanine nucleotide-binding protein G(T) subunit gamma; the interaction diminishes the association of DYNLT1 with dynein IC (DYNC1I1 or DYNC1I2). Interacts with GNB2, GNB3 and GNB5; the interactions occur in presence of guanine nucleotide-binding protein G(T) subunit gamma. Interacts with ACVR2B and ARHGEF2. Interacts with DNAI4. Interacts with CFAP61. Phosphorylated by BMPR2. The phosphorylation status is proposed to regulate the association with the cytoplasmic dynein complex and may have role in cytoplasmic dynein cargo release.

The protein resides in the golgi apparatus. It is found in the cytoplasm. It localises to the cytoskeleton. The protein localises to the spindle. Functionally, acts as one of several non-catalytic accessory components of the cytoplasmic dynein 1 complex that are thought to be involved in linking dynein to cargos and to adapter proteins that regulate dynein function. Cytoplasmic dynein 1 acts as a motor for the intracellular retrograde motility of vesicles and organelles along microtubules. Binds to transport cargos and is involved in apical cargo transport such as rhodopsin-bearing vesicles in polarized epithelia. Is involved in intracellular targeting of D-type retrovirus gag polyproteins to the cytoplasmic assembly site. May also be a accessory component of axonemal dynein. Its function is as follows. Plays a role in neuronal morphogenesis; the function is independent of cytoplasmic dynein and seems to be coupled to regulation of the actin cytoskeleton by enhancing Rac1 activity. Required for neurite outgrowth. The function in neurogenesis may be regulated by association with a G-protein beta-gamma dimer. May function as a receptor-independent activator of heterotrimeric G-protein signaling; the activation appears to be independent of a nucleotide exchange. Plays a role in regulating neurogenesis; inhibits the genesis of neurons from precursor cells during cortical development presumably by antagonizing ARHGEF2. Unrelated to the role in retrograde microtubule-associated movement may play a role in the dimerization of cytoplasmic proteins/domains such as for ACVR2B. Binds to the cytoplasmic domain of ACVR2B and, in vitro, inhibits ACVR2B signaling. Involved in the regulation of mitotic spindle orientation. The protein is Dynein light chain Tctex-type 1 (Dynlt1) of Rattus norvegicus (Rat).